Consider the following 109-residue polypeptide: MKHLAAYLLLGLGGNTSPSAADVKAVLTSVGIDADEDRLNKLISELEGKDIQQLIAEGSEKLASVPSGGAGGASGGAAAAGGAAEEAKEEEKEEEKEESDEDMGFGLFD.

The tract at residues 63 to 109 is disordered; that stretch reads ASVPSGGAGGASGGAAAAGGAAEEAKEEEKEEEKEESDEDMGFGLFD. Residues 68–79 are compositionally biased toward gly residues; sequence GGAGGASGGAAA. Over residues 91–103 the composition is skewed to acidic residues; that stretch reads EKEEEKEESDEDM. S99 carries the phosphoserine modification.

The protein belongs to the eukaryotic ribosomal protein P1/P2 family. P1 and P2 exist as dimers at the large ribosomal subunit.

Plays an important role in the elongation step of protein synthesis. This Fusarium culmorum protein is Large ribosomal subunit protein P2.